The sequence spans 139 residues: Transcription antitermination protein NusB (139 aa).

Belongs to the NusB family.

Involved in transcription antitermination. Required for transcription of ribosomal RNA (rRNA) genes. Binds specifically to the boxA antiterminator sequence of the ribosomal RNA (rrn) operons. The chain is Transcription antitermination protein NusB from Nitratiruptor sp. (strain SB155-2).